Here is a 70-residue protein sequence, read N- to C-terminus: Spore germination protein-like protein YpzD (70 aa).

This sequence belongs to the GerPA/GerPF family.

The chain is Spore germination protein-like protein YpzD (ypzD) from Bacillus subtilis (strain 168).